Reading from the N-terminus, the 814-residue chain is MAAHIAQRLTVQEQEIRRLNEEIGRLLELGLQGSVEHSPNPVLEQLRAENEKLKYRISHLQRSLREEQERARPGQYGEPGLKDAAPVEEPKQQNNKAKEKGQATKGENSVGGKPSACEGNKKNEKKAGKEVDGHKQEGPCAPGFIKDRLALYETLKNEHDALLAARAAHQSKPIKITLADGKQVDGESWKTTPYQVAIGISKGLADNVVIAKVNNELWDLDRPLEQDSNVELLKFDSEEAQAVYWHSSAHILGETMENFYGGCLCYGPPIENGFYYDMYLDGRGVSSNEFPSLENMCKAIIKEKQPFERLEVSKDLLLEMFKYNKFKCRILNEKVDTPTTTVYRCGPLIDLCRGPHVRHTGKIKTLKIYKNSSTYWEGRADMETLQRIYGISFPDSKLMKEWEQFQEEAKNRDHRKIGRDQELFFFHDLSPGSCFFLPRGAHIYNTLTDFIKGEYQIRNFTEVASPNIYNSKLWEMSGHWQHYSENMFSFEVEKETFALKPMNCPGHCLMFGHRPRSWRELPLRFADFGVLHRNELSGTLSGLTRVRRFQQDDAHIFCTMDQIQEEMNGCLQFLQSVYKVFGFTFQLHLSTRPENYLGEIEIWNEAEKQLESSLNQFGEPWKLNPGDGAFYGPKIDIKIKDAIGRYHQCATIQLDFQLPIRFNLTYVSKDGDDKKRPVIIHRAILGSVERMIAILCENYGGKWPFWLSPRQVMVIPVGPSCDEYAQQVCKDVFEAGFMAEVDLDHSCTLNKKIRNAQLAQCNFILVVGEKEKTDSAVNVRTRDNKVHGEILLTSAIEKLKTLKKLRSKNAEEEF.

Positions alanine 2 to arginine 72 form a coiled coil. Residues arginine 62 to proline 142 form a disordered region. 3 stretches are compositionally biased toward basic and acidic residues: residues serine 63–arginine 72, glutamate 88–glutamine 102, and glycine 119–glutamate 137. The region spanning lysine 172–lysine 234 is the TGS domain. Residues lysine 798 to lysine 804 carry the Nuclear localization signal motif.

This sequence belongs to the class-II aminoacyl-tRNA synthetase family.

It localises to the cytoplasm. Its subcellular location is the nucleus. The catalysed reaction is tRNA(Thr) + L-threonine + ATP = L-threonyl-tRNA(Thr) + AMP + diphosphate + H(+). Its function is as follows. Catalyzes the attachment of threonine to tRNA(Thr) in a two-step reaction: threonine is first activated by ATP to form Thr-AMP and then transferred to the acceptor end of tRNA(Thr). Also edits incorrectly charged tRNA(Thr) via its editing domain, at the post-transfer stage. This Xenopus tropicalis (Western clawed frog) protein is Threonine--tRNA ligase 2, cytoplasmic (tars3).